Reading from the N-terminus, the 147-residue chain is Hemoglobin subunit beta (147 aa).

V2 carries the post-translational modification N-acetylvaline. Positions 3-147 constitute a Globin domain; it reads HLTGEEKAAV…VANALAHKYH (145 aa). A Phosphothreonine modification is found at T13. The residue at position 45 (S45) is a Phosphoserine. K60 is modified (N6-acetyllysine). H64 serves as a coordination point for heme b. K83 carries the post-translational modification N6-acetyllysine. Heme b is bound at residue H93. The residue at position 94 (C94) is an S-nitrosocysteine. K145 bears the N6-acetyllysine mark.

The protein belongs to the globin family. Heterotetramer of two alpha chains and two beta chains. In terms of tissue distribution, red blood cells.

Functionally, involved in oxygen transport from the lung to the various peripheral tissues. In Cheracebus torquatus (Collared titi monkey), this protein is Hemoglobin subunit beta (HBB).